Consider the following 577-residue polypeptide: Arginine--tRNA ligase (577 aa).

The 'HIGH' region motif lies at 122–132; the sequence is PNVAKEMHVGH.

This sequence belongs to the class-I aminoacyl-tRNA synthetase family. In terms of assembly, monomer.

The protein resides in the cytoplasm. The catalysed reaction is tRNA(Arg) + L-arginine + ATP = L-arginyl-tRNA(Arg) + AMP + diphosphate. This is Arginine--tRNA ligase from Escherichia coli O139:H28 (strain E24377A / ETEC).